The following is a 533-amino-acid chain: D-3-phosphoglycerate dehydrogenase (533 aa).

A2 is modified (N-acetylalanine). S14 carries the phosphoserine modification. K21 is subject to N6-acetyllysine; alternate. A Glycyl lysine isopeptide (Lys-Gly) (interchain with G-Cter in SUMO1); alternate cross-link involves residue K21. A Glycyl lysine isopeptide (Lys-Gly) (interchain with G-Cter in SUMO2); alternate cross-link involves residue K21. An N6-acetyllysine modification is found at K58. Residues T78, 155-156 (RI), D175, T207, 234-236 (CAR), and D260 contribute to the NAD(+) site. The residue at position 78 (T78) is a Phosphothreonine. Residue R236 is part of the active site. E265 is a catalytic residue. Catalysis depends on H283, which acts as the Proton donor. Residue 283–286 (HLGA) participates in NAD(+) binding.

Belongs to the D-isomer specific 2-hydroxyacid dehydrogenase family. In terms of assembly, homotetramer.

It catalyses the reaction (2R)-3-phosphoglycerate + NAD(+) = 3-phosphooxypyruvate + NADH + H(+). It carries out the reaction (R)-2-hydroxyglutarate + NAD(+) = 2-oxoglutarate + NADH + H(+). The catalysed reaction is (S)-malate + NAD(+) = oxaloacetate + NADH + H(+). The protein operates within amino-acid biosynthesis; L-serine biosynthesis; L-serine from 3-phospho-D-glycerate: step 1/3. Catalyzes the reversible oxidation of 3-phospho-D-glycerate to 3-phosphonooxypyruvate, the first step of the phosphorylated L-serine biosynthesis pathway. Also catalyzes the reversible oxidation of 2-hydroxyglutarate to 2-oxoglutarate and the reversible oxidation of (S)-malate to oxaloacetate. The polypeptide is D-3-phosphoglycerate dehydrogenase (PHGDH) (Homo sapiens (Human)).